Here is a 155-residue protein sequence, read N- to C-terminus: UPF0060 membrane protein MA_3936 (155 aa).

A run of 3 helical transmembrane segments spans residues 8–28 (LCPF…ICLW), 35–55 (AVFG…PTFQ), and 62–82 (VYAA…LFVD).

The protein belongs to the UPF0060 family.

It localises to the cell membrane. This Methanosarcina acetivorans (strain ATCC 35395 / DSM 2834 / JCM 12185 / C2A) protein is UPF0060 membrane protein MA_3936.